The chain runs to 236 residues: UPF0257 lipoprotein YnfC (236 aa).

The first 16 residues, 1-16 (MKKPLLLTLLCMILAG), serve as a signal peptide directing secretion. Cysteine 17 carries the N-palmitoyl cysteine lipid modification. Cysteine 17 is lipidated: S-diacylglycerol cysteine.

The protein belongs to the UPF0257 family.

It is found in the cell membrane. The chain is UPF0257 lipoprotein YnfC from Salmonella schwarzengrund (strain CVM19633).